Reading from the N-terminus, the 172-residue chain is dCTP deaminase, dUMP-forming (172 aa).

Residues 93–98 (RSSVGR), aspartate 111, 119–121 (TLE), glutamine 138, and tyrosine 151 each bind dCTP. The active-site Proton donor/acceptor is the glutamate 121.

The protein belongs to the dCTP deaminase family. As to quaternary structure, homotrimer.

It catalyses the reaction dCTP + 2 H2O = dUMP + NH4(+) + diphosphate. The protein operates within pyrimidine metabolism; dUMP biosynthesis; dUMP from dCTP: step 1/1. Bifunctional enzyme that catalyzes both the deamination of dCTP to dUTP and the hydrolysis of dUTP to dUMP without releasing the toxic dUTP intermediate. The protein is dCTP deaminase, dUMP-forming of Hathewaya histolytica (Clostridium histolyticum).